We begin with the raw amino-acid sequence, 269 residues long: Tryptophan synthase alpha chain (269 aa).

Residues glutamate 49 and aspartate 60 each act as proton acceptor in the active site.

Belongs to the TrpA family. Tetramer of two alpha and two beta chains.

The catalysed reaction is (1S,2R)-1-C-(indol-3-yl)glycerol 3-phosphate + L-serine = D-glyceraldehyde 3-phosphate + L-tryptophan + H2O. It participates in amino-acid biosynthesis; L-tryptophan biosynthesis; L-tryptophan from chorismate: step 5/5. The alpha subunit is responsible for the aldol cleavage of indoleglycerol phosphate to indole and glyceraldehyde 3-phosphate. This chain is Tryptophan synthase alpha chain, found in Azotobacter vinelandii (strain DJ / ATCC BAA-1303).